We begin with the raw amino-acid sequence, 317 residues long: Beta-ketoacyl-[acyl-carrier-protein] synthase III (317 aa).

Catalysis depends on residues cysteine 112 and histidine 244. Residues 245–249 form an ACP-binding region; the sequence is QANLR. Asparagine 274 is a catalytic residue.

This sequence belongs to the thiolase-like superfamily. FabH family. As to quaternary structure, homodimer.

It is found in the cytoplasm. It catalyses the reaction malonyl-[ACP] + acetyl-CoA + H(+) = 3-oxobutanoyl-[ACP] + CO2 + CoA. Its pathway is lipid metabolism; fatty acid biosynthesis. Functionally, catalyzes the condensation reaction of fatty acid synthesis by the addition to an acyl acceptor of two carbons from malonyl-ACP. Catalyzes the first condensation reaction which initiates fatty acid synthesis and may therefore play a role in governing the total rate of fatty acid production. Possesses both acetoacetyl-ACP synthase and acetyl transacylase activities. Its substrate specificity determines the biosynthesis of branched-chain and/or straight-chain of fatty acids. In Serratia proteamaculans (strain 568), this protein is Beta-ketoacyl-[acyl-carrier-protein] synthase III.